The primary structure comprises 136 residues: Large ribosomal subunit protein uL22 (136 aa).

This sequence belongs to the universal ribosomal protein uL22 family. Part of the 50S ribosomal subunit.

Functionally, this protein binds specifically to 23S rRNA; its binding is stimulated by other ribosomal proteins, e.g. L4, L17, and L20. It is important during the early stages of 50S assembly. It makes multiple contacts with different domains of the 23S rRNA in the assembled 50S subunit and ribosome. Its function is as follows. The globular domain of the protein is located near the polypeptide exit tunnel on the outside of the subunit, while an extended beta-hairpin is found that lines the wall of the exit tunnel in the center of the 70S ribosome. In Parabacteroides distasonis (strain ATCC 8503 / DSM 20701 / CIP 104284 / JCM 5825 / NCTC 11152), this protein is Large ribosomal subunit protein uL22.